A 410-amino-acid polypeptide reads, in one-letter code: Transcription factor rglT (410 aa).

The segment at 1–24 (MQFDSLPLPPSSSHDTTSVPPLKR) is disordered. A DNA-binding region (zn(2)-C6 fungal-type) is located at residues 28–55 (CDECRKRKLKCSGEATGCSRCLKQSLPC). The interval 353 to 372 (HRTRTVESPNEPGSCSPVSH) is disordered. The segment covering 358–369 (VESPNEPGSCSP) has biased composition (polar residues).

It is found in the nucleus. Transcription factor that is involved in protection against oxidative stress. Binds to promoter regions of the gliotoxin (GT) biosynthetic genes gliZ, gliF, gliT, gliM, gliA and gtmA. Two related but different DNA motifs (5'-TCGG-3' and 5'-CGGNCGG-3') are specifically enriched among rglT binding sites in GT-inducing conditions. Also indirectly regulates the expression of gliP, gliG, gliH and gliN. Plays a key role in resistance against exogenously-added GT and GT biosynthesis, mainly through the direct regulation of gliT. Furthermore, rglT is important for virulence in chemotherapeutic mice with invasive pulmonary aspergillosis (IPA). The chain is Transcription factor rglT from Aspergillus fumigatus (strain CBS 144.89 / FGSC A1163 / CEA10) (Neosartorya fumigata).